A 114-amino-acid polypeptide reads, in one-letter code: uncharacterized protein (114 aa).

The protein to E.coli YfiI and P.aeruginosa RluD.

This is an uncharacterized protein from Escherichia coli O6:H1 (strain CFT073 / ATCC 700928 / UPEC).